The chain runs to 1116 residues: Phosphatidylinositol 4-kinase beta 2 (1116 aa).

Residues 1-143 enclose the PIK helical domain; the sequence is MQMAQFLSLV…SRIQEKCQIA (143 aa). 8 consecutive repeat copies span residues 210–229, 242–261, 264–283, 286–304, 307–326, 329–348, 351–370, and 378–396. The segment at 210 to 507 is 11 X 20 AA approximate repeats (PPC); that stretch reads ADDNKIFKRL…FRDRDRSVED (298 aa). Positions 394–404 are enriched in basic and acidic residues; it reads EKRNGNERNET. Residues 394-417 are disordered; that stretch reads EKRNGNERNETDETVYTDETSGED. Positions 405–415 are enriched in acidic residues; it reads DETVYTDETSG. Copy 9 of the repeat occupies 418-436; the sequence is NGREGFFKKLFKEKFEDKP. A phosphoserine mark is found at Ser447 and Ser452. Tandem repeats lie at residues 452–470 and 488–507. Disordered regions lie at residues 515–540 and 794–813; these read KYKE…LPNN and GEAP…SDAQ. In terms of domain architecture, PI3K/PI4K catalytic spans 830–1101; sequence EFWEGKRLRI…LISSSLDAWR (272 aa). The G-loop stretch occupies residues 836–842; it reads RLRIRKD. Residues 964–972 form a catalytic loop region; it reads QIKDRHNGN. Positions 983 to 1007 are activation loop; the sequence is HIDFGFMLSNSPGGVNFESAPFKLT.

It belongs to the PI3/PI4-kinase family. Type III PI4K subfamily.

It localises to the cell membrane. The protein localises to the golgi apparatus. It is found in the trans-Golgi network. Its subcellular location is the cytoplasmic vesicle membrane. It catalyses the reaction a 1,2-diacyl-sn-glycero-3-phospho-(1D-myo-inositol) + ATP = a 1,2-diacyl-sn-glycero-3-phospho-(1D-myo-inositol 4-phosphate) + ADP + H(+). Functionally, acts on phosphatidylinositol (PtdIns) in the first committed step in the production of the second messenger inositol-1,4,5-trisphosphate. Necessary for proper organization of the trans-Golgi network (TGN) and post-Golgi secretion in root hairs. Together with PI4KB1, required during polarized root hair expansion and pollen tube elongation. Functions redundantly with PI4KB1 upstream of the cold response phosphoinositide-dependent phospholipase C (PI-PLC) pathway. The sequence is that of Phosphatidylinositol 4-kinase beta 2 (PI4KB2) from Arabidopsis thaliana (Mouse-ear cress).